A 695-amino-acid chain; its full sequence is Polyribonucleotide nucleotidyltransferase (695 aa).

Mg(2+)-binding residues include D488 and D494. The KH domain maps to P554–V613. In terms of domain architecture, S1 motif spans G623–K690.

It belongs to the polyribonucleotide nucleotidyltransferase family. As to quaternary structure, component of the RNA degradosome, which is a multiprotein complex involved in RNA processing and mRNA degradation. Requires Mg(2+) as cofactor.

The protein localises to the cytoplasm. The catalysed reaction is RNA(n+1) + phosphate = RNA(n) + a ribonucleoside 5'-diphosphate. Its function is as follows. Involved in mRNA degradation. Catalyzes the phosphorolysis of single-stranded polyribonucleotides processively in the 3'- to 5'-direction. In Ruthia magnifica subsp. Calyptogena magnifica, this protein is Polyribonucleotide nucleotidyltransferase.